A 324-amino-acid polypeptide reads, in one-letter code: Hydroxyacylglutathione hydrolase 2, mitochondrial (324 aa).

The transit peptide at 1–64 directs the protein to the mitochondrion; it reads MQTISKASSA…KSIRVSKFCS (64 aa). Zn(2+) contacts are provided by H124 and H126. Fe cation-binding residues include D128 and H129. The Zn(2+) site is built by H182 and D201. Residues D201 and H239 each contribute to the Fe cation site.

Belongs to the metallo-beta-lactamase superfamily. Glyoxalase II family. As to quaternary structure, monomer. Requires Fe(3+) as cofactor. It depends on Fe(2+) as a cofactor. The cofactor is Zn(2+).

It localises to the mitochondrion. It carries out the reaction an S-(2-hydroxyacyl)glutathione + H2O = a 2-hydroxy carboxylate + glutathione + H(+). The protein operates within secondary metabolite metabolism; methylglyoxal degradation; (R)-lactate from methylglyoxal: step 2/2. Thiolesterase that catalyzes the hydrolysis of S-D-lactoyl-glutathione to form glutathione and D-lactic acid. The polypeptide is Hydroxyacylglutathione hydrolase 2, mitochondrial (Arabidopsis thaliana (Mouse-ear cress)).